Here is a 361-residue protein sequence, read N- to C-terminus: Phospho-N-acetylmuramoyl-pentapeptide-transferase (361 aa).

Transmembrane regions (helical) follow at residues 28–48, 74–94, 99–119, 133–153, 168–188, 203–223, 236–256, 263–283, 288–308, and 338–358; these read LAII…IKFL, TMGG…LADL, IWIT…DDYA, SKLL…EYLD, LSLD…VGSS, VPIA…GNLI, TGEL…FLWF, VFMG…ISVI, IVLA…ILQV, and KVVI…LSSL.

Belongs to the glycosyltransferase 4 family. MraY subfamily. The cofactor is Mg(2+).

It localises to the cell inner membrane. The catalysed reaction is UDP-N-acetyl-alpha-D-muramoyl-L-alanyl-gamma-D-glutamyl-meso-2,6-diaminopimeloyl-D-alanyl-D-alanine + di-trans,octa-cis-undecaprenyl phosphate = di-trans,octa-cis-undecaprenyl diphospho-N-acetyl-alpha-D-muramoyl-L-alanyl-D-glutamyl-meso-2,6-diaminopimeloyl-D-alanyl-D-alanine + UMP. It participates in cell wall biogenesis; peptidoglycan biosynthesis. Catalyzes the initial step of the lipid cycle reactions in the biosynthesis of the cell wall peptidoglycan: transfers peptidoglycan precursor phospho-MurNAc-pentapeptide from UDP-MurNAc-pentapeptide onto the lipid carrier undecaprenyl phosphate, yielding undecaprenyl-pyrophosphoryl-MurNAc-pentapeptide, known as lipid I. The chain is Phospho-N-acetylmuramoyl-pentapeptide-transferase from Rickettsia felis (strain ATCC VR-1525 / URRWXCal2) (Rickettsia azadi).